The chain runs to 372 residues: MSFNALPQSSMPLLMGNSLNAWSDALTGFAPMGLPLGLLVIAAIPLVFIALYALTYGVYGERKISAFMQDRLGPMEVGKWGILQTLADILKLLQKEDIVPTSADKFLFVIGPGVLFVGSFLAFAVLPFGPAFIGANLNVGLFYAIGIVALEVVGILAAGWGSNNKWALYGAVRSVAQIVSYEIPAAIALLCGAMMAGTLDMQEINVLQSGPWGFAHFFLFQSPIAWLPFLIYFIASLAETNRAPFDIPEAESELVAGYFTEYSGMKFAVIFLAEYGSMFMVSAIIAIVFLGGWNSPLPNIGSLALNDLTTGPVWGAFWIIMKGFFFIFVQMWLRWTLPRLRVDQLMYLCWKVLTPFAFVSFVLTAIWMIYVP.

8 helical membrane-spanning segments follow: residues 34 to 54 (LPLGLLVIAAIPLVFIALYAL), 106 to 126 (FLFVIGPGVLFVGSFLAFAVL), 139 to 159 (VGLFYAIGIVALEVVGILAAG), 178 to 198 (IVSYEIPAAIALLCGAMMAGT), 217 to 237 (FFLFQSPIAWLPFLIYFIASL), 269 to 289 (VIFLAEYGSMFMVSAIIAIVF), 313 to 333 (VWGAFWIIMKGFFFIFVQMWL), and 352 to 372 (VLTPFAFVSFVLTAIWMIYVP).

This sequence belongs to the complex I subunit 1 family. NDH-1 is composed of 14 different subunits. Subunits NuoA, H, J, K, L, M, N constitute the membrane sector of the complex.

Its subcellular location is the cell inner membrane. It carries out the reaction a quinone + NADH + 5 H(+)(in) = a quinol + NAD(+) + 4 H(+)(out). Its function is as follows. NDH-1 shuttles electrons from NADH, via FMN and iron-sulfur (Fe-S) centers, to quinones in the respiratory chain. The immediate electron acceptor for the enzyme in this species is believed to be ubiquinone. Couples the redox reaction to proton translocation (for every two electrons transferred, four hydrogen ions are translocated across the cytoplasmic membrane), and thus conserves the redox energy in a proton gradient. This subunit may bind ubiquinone. This chain is NADH-quinone oxidoreductase subunit H, found in Chlorobium luteolum (strain DSM 273 / BCRC 81028 / 2530) (Pelodictyon luteolum).